Here is a 162-residue protein sequence, read N- to C-terminus: Phosphopantetheine adenylyltransferase (162 aa).

Thr-10 serves as a coordination point for substrate. Residues 10-11 and His-18 contribute to the ATP site; that span reads TF. Substrate contacts are provided by Lys-42, Leu-74, and Arg-88. Residues 89–91, Glu-99, and 124–130 contribute to the ATP site; these read GLR and FSCISST.

The protein belongs to the bacterial CoaD family. In terms of assembly, homohexamer. Requires Mg(2+) as cofactor.

The protein localises to the cytoplasm. It carries out the reaction (R)-4'-phosphopantetheine + ATP + H(+) = 3'-dephospho-CoA + diphosphate. It participates in cofactor biosynthesis; coenzyme A biosynthesis; CoA from (R)-pantothenate: step 4/5. Functionally, reversibly transfers an adenylyl group from ATP to 4'-phosphopantetheine, yielding dephospho-CoA (dPCoA) and pyrophosphate. This chain is Phosphopantetheine adenylyltransferase, found in Francisella philomiragia subsp. philomiragia (strain ATCC 25017 / CCUG 19701 / FSC 153 / O#319-036).